Reading from the N-terminus, the 302-residue chain is Protoheme IX farnesyltransferase (302 aa).

The next 9 helical transmembrane spans lie at 28-48, 50-70, 95-115, 122-142, 150-170, 176-196, 221-241, 243-263, and 282-302; these read VVALMILTSVIGMLLAAPGVP, WSVLLFGNLGIALLAGAAAVV, IAPLDALLFATVLAALGMVVL, LTAWLTLASLVGYAGVYTLFL, IVIGGLAGAMPPLLGWTAVTG, ALLLVLIIFAWTPPHFWALAI, LHILLYTLMLLAVSLLPFVTG, SGGIYLVGALALGLRFLQYAV, and ITYLMALFVVLLVDHFVFVPA.

Belongs to the UbiA prenyltransferase family. Protoheme IX farnesyltransferase subfamily.

The protein localises to the cell inner membrane. The enzyme catalyses heme b + (2E,6E)-farnesyl diphosphate + H2O = Fe(II)-heme o + diphosphate. It functions in the pathway porphyrin-containing compound metabolism; heme O biosynthesis; heme O from protoheme: step 1/1. Functionally, converts heme B (protoheme IX) to heme O by substitution of the vinyl group on carbon 2 of heme B porphyrin ring with a hydroxyethyl farnesyl side group. The sequence is that of Protoheme IX farnesyltransferase from Marinobacter nauticus (strain ATCC 700491 / DSM 11845 / VT8) (Marinobacter aquaeolei).